The chain runs to 427 residues: Adenylosuccinate synthetase (427 aa).

GTP-binding positions include 12–18 (GDEGKGK) and 40–42 (GHT). Catalysis depends on aspartate 13, which acts as the Proton acceptor. Positions 13 and 40 each coordinate Mg(2+). IMP contacts are provided by residues 13–16 (DEGK), 38–41 (NAGH), threonine 128, arginine 142, glutamine 223, threonine 238, and arginine 302. Catalysis depends on histidine 41, which acts as the Proton donor. 298–304 (VTTGRDR) is a binding site for substrate. Residues arginine 304, 330–332 (KLD), and 412–414 (GVG) each bind GTP.

It belongs to the adenylosuccinate synthetase family. As to quaternary structure, homodimer. Mg(2+) is required as a cofactor.

It localises to the cytoplasm. The catalysed reaction is IMP + L-aspartate + GTP = N(6)-(1,2-dicarboxyethyl)-AMP + GDP + phosphate + 2 H(+). It functions in the pathway purine metabolism; AMP biosynthesis via de novo pathway; AMP from IMP: step 1/2. Its function is as follows. Plays an important role in the de novo pathway of purine nucleotide biosynthesis. Catalyzes the first committed step in the biosynthesis of AMP from IMP. This chain is Adenylosuccinate synthetase, found in Streptomyces griseus subsp. griseus (strain JCM 4626 / CBS 651.72 / NBRC 13350 / KCC S-0626 / ISP 5235).